We begin with the raw amino-acid sequence, 122 residues long: Large ribosomal subunit protein uL14 (122 aa).

The protein belongs to the universal ribosomal protein uL14 family. In terms of assembly, part of the 50S ribosomal subunit. Forms a cluster with proteins L3 and L19. In the 70S ribosome, L14 and L19 interact and together make contacts with the 16S rRNA in bridges B5 and B8.

Its function is as follows. Binds to 23S rRNA. Forms part of two intersubunit bridges in the 70S ribosome. The sequence is that of Large ribosomal subunit protein uL14 from Chelativorans sp. (strain BNC1).